A 222-amino-acid chain; its full sequence is UPF0128 protein TK2294 (222 aa).

The protein belongs to the UPF0128 family.

This chain is UPF0128 protein TK2294, found in Thermococcus kodakarensis (strain ATCC BAA-918 / JCM 12380 / KOD1) (Pyrococcus kodakaraensis (strain KOD1)).